Here is a 181-residue protein sequence, read N- to C-terminus: Mediator of RNA polymerase II transcription subunit 19 (181 aa).

The interval 120–181 (GMPGPGKPGI…TDGERRRKRK (62 aa)) is disordered. Positions 122 to 133 (PGPGKPGIGPQV) are enriched in gly residues. Polar residues predominate over residues 143-158 (RSYNTESARESSNNEE).

Belongs to the Mediator complex subunit 19 family. As to quaternary structure, component of the Mediator complex.

The protein localises to the nucleus. Functionally, component of the Mediator complex, a coactivator involved in the regulated transcription of nearly all RNA polymerase II-dependent genes. Mediator functions as a bridge to convey information from gene-specific regulatory proteins to the basal RNA polymerase II transcription machinery. Mediator is recruited to promoters by direct interactions with regulatory proteins and serves as a scaffold for the assembly of a functional preinitiation complex with RNA polymerase II and the general transcription factors. The protein is Mediator of RNA polymerase II transcription subunit 19 (ROX3) of Yarrowia lipolytica (strain CLIB 122 / E 150) (Yeast).